A 445-amino-acid chain; its full sequence is MSLAPSVIEPAHEEDAFMDLLATSALDDPLAAARDATADMLRQRQGDHSLPQPFYNDPRVFALEMREIFEHEWLFVGMTCEIPAKGNYLTVQIGDNPIIVVRGDQGTIHAFHNVCRHRGSRLCTQAKGKVAKLVCPYHQWTYELDGRLLFAGQDMGEDFDLGAHGLKPVAVTHAGGFLFVSLADQPPAIDDFLATLDDYLAPYEMDNVKVAAESNIVEQANWKLVIENNRECYHCNGAHPELLNSLIEYDDTDDPRATPAYRDLVARQQAHWEQQQVPWALKRFGKRNRLTRTPMIEGVVSMTMDGRPASQRLMGRLPNPDMGSLRILHLPNSWNHFMGDHAVVFRVLPLGPQQTLVTTKWLVHRDAQEGVDYDPEWMRKVWDATTDQDRQLAEENQRGINSVAYQPGPYSRTYEFGVIDFVDWYSDTMLSRLDAEAPSLHIVQG.

The Rieske domain maps to 73 to 180 (WLFVGMTCEI…VTHAGGFLFV (108 aa)). [2Fe-2S] cluster contacts are provided by cysteine 115, histidine 117, cysteine 135, and histidine 138. The Fe cation site is built by histidine 234 and histidine 239.

This sequence belongs to the bacterial ring-hydroxylating dioxygenase alpha subunit family. Homotrimer. The system is composed of an oxygenase subunit (BmoA) and a reductase subunit (BmoB). Maximal specific activity is obtained when the ratio of BmoA to BmoB is 5:1. [2Fe-2S] cluster is required as a cofactor. The cofactor is Fe cation.

The catalysed reaction is glycine betaine + NADH + O2 + H(+) = N,N-dimethylglycine + formaldehyde + NAD(+) + H2O. With respect to regulation, activity is absolutely dependent on the presence of BmoB. Glycine betaine monooxygenase activity is significantly enhanced by Fe(2+) and severely inhibited by heavy-metal ions, including Co(2+), Mn(2+), Zn(2+), Cu(2+) and Ag(+). Severely inhibited by EDTA. Functionally, involved in degradation of glycine betaine. Part of a Rieske-type oxygenase system that catalyzes the conversion of glycine betaine (GB) to dimethylglycine (DMG). This subunit is the terminal oxygenase component of the system. Is specific for GB, and does not show any activity on choline, L-carnitine, stachydrine, dimethylglycine or sarcosine. Activity is strictly dependent on NADH. This Chromohalobacter salexigens (strain ATCC BAA-138 / DSM 3043 / CIP 106854 / NCIMB 13768 / 1H11) protein is Glycine betaine monooxygenase oxygenase subunit.